A 184-amino-acid chain; its full sequence is MLVSSSVLKDDSSLRIFKESPNEFEYIIKRHDMDDRKEDTESKERRSTMGSSFIRFGRGQSFFNNLDNSAFDNEIDSKVSRHPRWKSPDIVIRFGRSGMKSTNDEQPKRGKNDLNFIRFGRNIQIVPTDFDLSAVCSALMSNDAISDAGLHPDVTRLFRLCNNLNKITGEISLDSLETNSNHRE.

The propeptide occupies 1–44; it reads MLVSSSVLKDDSSLRIFKESPNEFEYIIKRHDMDDRKEDTESKE. The residue at position 56 (Phe56) is a Phenylalanine amide. A propeptide spanning residues 59–83 is cleaved from the precursor; it reads GQSFFNNLDNSAFDNEIDSKVSRHP. Phe94 is subject to Phenylalanine amide. The propeptide occupies 97–107; that stretch reads SGMKSTNDEQP. Phe119 is modified (phenylalanine amide). A propeptide spanning residues 122 to 184 is cleaved from the precursor; that stretch reads NIQIVPTDFD…SLETNSNHRE (63 aa).

This sequence belongs to the FARP (FMRFamide related peptide) family. As to expression, expressed throughout the central nervous system.

It localises to the secreted. Functionally, in insects, FMRFamide and related peptides have modulatory actions at skeletal neuromuscular junctions, and peptides that are immunologically related to FMRFamide are released into the circulation from neurohemal organs. This is FMRFamide-related peptides from Camponotus floridanus (Florida carpenter ant).